Here is a 119-residue protein sequence, read N- to C-terminus: Large ribosomal subunit protein eL31z (119 aa).

It belongs to the eukaryotic ribosomal protein eL31 family.

The chain is Large ribosomal subunit protein eL31z (RPL31A) from Arabidopsis thaliana (Mouse-ear cress).